Reading from the N-terminus, the 448-residue chain is Probable glycine dehydrogenase (decarboxylating) subunit 1 (448 aa).

This sequence belongs to the GcvP family. N-terminal subunit subfamily. In terms of assembly, the glycine cleavage system is composed of four proteins: P, T, L and H. In this organism, the P 'protein' is a heterodimer of two subunits.

It carries out the reaction N(6)-[(R)-lipoyl]-L-lysyl-[glycine-cleavage complex H protein] + glycine + H(+) = N(6)-[(R)-S(8)-aminomethyldihydrolipoyl]-L-lysyl-[glycine-cleavage complex H protein] + CO2. Functionally, the glycine cleavage system catalyzes the degradation of glycine. The P protein binds the alpha-amino group of glycine through its pyridoxal phosphate cofactor; CO(2) is released and the remaining methylamine moiety is then transferred to the lipoamide cofactor of the H protein. This chain is Probable glycine dehydrogenase (decarboxylating) subunit 1, found in Geobacillus thermodenitrificans (strain NG80-2).